Here is a 284-residue protein sequence, read N- to C-terminus: Bifunctional protein FolD 1 (284 aa).

NADP(+) is bound by residues 166–168 and Ile-232; that span reads GAS.

It belongs to the tetrahydrofolate dehydrogenase/cyclohydrolase family. As to quaternary structure, homodimer.

It catalyses the reaction (6R)-5,10-methylene-5,6,7,8-tetrahydrofolate + NADP(+) = (6R)-5,10-methenyltetrahydrofolate + NADPH. It carries out the reaction (6R)-5,10-methenyltetrahydrofolate + H2O = (6R)-10-formyltetrahydrofolate + H(+). It functions in the pathway one-carbon metabolism; tetrahydrofolate interconversion. Catalyzes the oxidation of 5,10-methylenetetrahydrofolate to 5,10-methenyltetrahydrofolate and then the hydrolysis of 5,10-methenyltetrahydrofolate to 10-formyltetrahydrofolate. This chain is Bifunctional protein FolD 1, found in Pseudomonas savastanoi pv. phaseolicola (strain 1448A / Race 6) (Pseudomonas syringae pv. phaseolicola (strain 1448A / Race 6)).